A 473-amino-acid polypeptide reads, in one-letter code: Ribulose bisphosphate carboxylase large chain (473 aa).

Residues Asn116 and Thr166 each contribute to the substrate site. Lys168 acts as the Proton acceptor in catalysis. Lys170 provides a ligand contact to substrate. 3 residues coordinate Mg(2+): Lys194, Asp196, and Glu197. Residue Lys194 is modified to N6-carboxylysine. Catalysis depends on His287, which acts as the Proton acceptor. Residues Arg288, His320, and Ser372 each coordinate substrate.

The protein belongs to the RuBisCO large chain family. Type I subfamily. Heterohexadecamer of 8 large chains and 8 small chains. It depends on Mg(2+) as a cofactor.

The enzyme catalyses 2 (2R)-3-phosphoglycerate + 2 H(+) = D-ribulose 1,5-bisphosphate + CO2 + H2O. The catalysed reaction is D-ribulose 1,5-bisphosphate + O2 = 2-phosphoglycolate + (2R)-3-phosphoglycerate + 2 H(+). Functionally, ruBisCO catalyzes two reactions: the carboxylation of D-ribulose 1,5-bisphosphate, the primary event in carbon dioxide fixation, as well as the oxidative fragmentation of the pentose substrate. Both reactions occur simultaneously and in competition at the same active site. This Cupriavidus metallidurans (strain ATCC 43123 / DSM 2839 / NBRC 102507 / CH34) (Ralstonia metallidurans) protein is Ribulose bisphosphate carboxylase large chain.